Consider the following 258-residue polypeptide: Deoxyribose-phosphate aldolase (258 aa).

The active-site Proton donor/acceptor is the Asp-101. Lys-166 serves as the catalytic Schiff-base intermediate with acetaldehyde. Catalysis depends on Lys-200, which acts as the Proton donor/acceptor.

It belongs to the DeoC/FbaB aldolase family. DeoC type 2 subfamily.

It is found in the cytoplasm. It carries out the reaction 2-deoxy-D-ribose 5-phosphate = D-glyceraldehyde 3-phosphate + acetaldehyde. The protein operates within carbohydrate degradation; 2-deoxy-D-ribose 1-phosphate degradation; D-glyceraldehyde 3-phosphate and acetaldehyde from 2-deoxy-alpha-D-ribose 1-phosphate: step 2/2. Its function is as follows. Catalyzes a reversible aldol reaction between acetaldehyde and D-glyceraldehyde 3-phosphate to generate 2-deoxy-D-ribose 5-phosphate. In Actinobacillus pleuropneumoniae serotype 3 (strain JL03), this protein is Deoxyribose-phosphate aldolase.